The following is a 151-amino-acid chain: Cytochrome c-type biogenesis protein CcmE 1 (151 aa).

The Cytoplasmic segment spans residues 1 to 8 (MNPLRKKR). The chain crosses the membrane as a helical; Signal-anchor for type II membrane protein span at residues 9–29 (LIIILAILVGVGAAVGLALSA). The Periplasmic segment spans residues 30–151 (LQQNINLFYT…QSAPTPAKEG (122 aa)). Positions 124 and 128 each coordinate heme. The disordered stretch occupies residues 131-151 (PEVTKALKDSGQSAPTPAKEG).

It belongs to the CcmE/CycJ family.

The protein localises to the cell inner membrane. In terms of biological role, heme chaperone required for the biogenesis of c-type cytochromes. Transiently binds heme delivered by CcmC and transfers the heme to apo-cytochromes in a process facilitated by CcmF and CcmH. In Pseudomonas fluorescens (strain Pf0-1), this protein is Cytochrome c-type biogenesis protein CcmE 1.